Reading from the N-terminus, the 435-residue chain is Endoglucanase EG-1 (435 aa).

An N-terminal signal peptide occupies residues 1-20; sequence MARGTALLGLTSLLLGLVNG. Position 21 is a pyrrolidone carboxylic acid (Q21). 3 cysteine pairs are disulfide-bonded: C38/C44, C71/C93, and C83/C89. An N-linked (GlcNAc...) asparagine glycan is attached at N109. 6 disulfide bridges follow: C160–C385, C192–C215, C196–C214, C235–C254, C243–C248, and C259–C335. The Nucleophile role is filled by E217. Catalysis depends on E222, which acts as the Proton donor. The N-linked (GlcNAc...) asparagine glycan is linked to N267.

The protein belongs to the glycosyl hydrolase 7 (cellulase C) family.

The protein resides in the secreted. The catalysed reaction is Endohydrolysis of (1-&gt;4)-beta-D-glucosidic linkages in cellulose, lichenin and cereal beta-D-glucans.. Its function is as follows. The biological conversion of cellulose to glucose generally requires three types of hydrolytic enzymes: (1) Endoglucanases which cut internal beta-1,4-glucosidic bonds; (2) Exocellobiohydrolases that cut the disaccharide cellobiose from the non-reducing end of the cellulose polymer chain; (3) Beta-1,4-glucosidases which hydrolyze the cellobiose and other short cello-oligosaccharides to glucose. In Humicola insolens (Soft-rot fungus), this protein is Endoglucanase EG-1 (EG-1).